Reading from the N-terminus, the 504-residue chain is Plasma protease C1 inhibitor (504 aa).

A signal peptide spans 1 to 22; the sequence is MASRLTPLTLLLLLLAGDRAFS. The tract at residues 22-67 is disordered; sequence SDPEATSHSTQDPLEAQAKSRESFPERDDSWSPPEPTVLPSTWPTT. Over residues 39–51 the composition is skewed to basic and acidic residues; the sequence is AKSRESFPERDDS. 3 N-linked (GlcNAc...) asparagine glycosylation sites follow: asparagine 75, asparagine 83, and asparagine 107. Polar residues predominate over residues 85 to 124; that stretch reads SFSQHSQPAAQLPTDSPGQPPLNSSSQPSTASDLPTQATT. The disordered stretch occupies residues 85-141; that stretch reads SFSQHSQPAAQLPTDSPGQPPLNSSSQPSTASDLPTQATTEPFCPEPLAQCSDSDRD. 2 cysteine pairs are disulfide-bonded: cysteine 128-cysteine 432 and cysteine 135-cysteine 210. N-linked (GlcNAc...) asparagine glycosylation is found at asparagine 243 and asparagine 356.

Belongs to the serpin family. In terms of assembly, interacts with MASP1.

The protein localises to the secreted. Functionally, serine protease inhibitor, which acrs as a regulator of the classical complement pathway. Forms a proteolytically inactive stoichiometric complex with the C1r or C1s proteases. May also regulate blood coagulation, fibrinolysis and the generation of kinins. Very efficient inhibitor of FXIIa. Inhibits chymotrypsin and kallikrein. In Mus musculus (Mouse), this protein is Plasma protease C1 inhibitor (Serping1).